Here is a 257-residue protein sequence, read N- to C-terminus: MNPLIIKLGGVLLDSDEALERLFTALDSYRAEHRCPLLIVHGGGCLVDELMHKLSLPVVKKNGLRVTPADQIAIITGALAGTANKTLLAWAKKHAINAVGLCLGDGDSVNVTPLDPALGHVGRAHPGSPVLLTTLLEAGYLPIISSIGLTHDGELMNVNADQAATALAATLGADLILLSDISGILDGKGQRIAEMTAQKAEQLIEQGIITDGMIVKVNAALDAARTLGRPVDIASWRHAEQLPALFNGVAIGTRILA.

Residues 43–44 (GG), Arg65, and Asn157 each bind substrate. ATP contacts are provided by residues 180 to 185 (DISGIL) and 208 to 210 (IIT).

It belongs to the acetylglutamate kinase family. ArgB subfamily. As to quaternary structure, homodimer.

It localises to the cytoplasm. The catalysed reaction is N-acetyl-L-glutamate + ATP = N-acetyl-L-glutamyl 5-phosphate + ADP. The protein operates within amino-acid biosynthesis; L-arginine biosynthesis; N(2)-acetyl-L-ornithine from L-glutamate: step 2/4. Functionally, catalyzes the ATP-dependent phosphorylation of N-acetyl-L-glutamate. The protein is Acetylglutamate kinase of Sodalis glossinidius (strain morsitans).